The following is a 300-amino-acid chain: UDP-3-O-acyl-N-acetylglucosamine deacetylase (300 aa).

Zn(2+) contacts are provided by His-78, His-237, and Asp-241. Residue His-264 is the Proton donor of the active site.

It belongs to the LpxC family. The cofactor is Zn(2+).

It catalyses the reaction a UDP-3-O-[(3R)-3-hydroxyacyl]-N-acetyl-alpha-D-glucosamine + H2O = a UDP-3-O-[(3R)-3-hydroxyacyl]-alpha-D-glucosamine + acetate. It participates in glycolipid biosynthesis; lipid IV(A) biosynthesis; lipid IV(A) from (3R)-3-hydroxytetradecanoyl-[acyl-carrier-protein] and UDP-N-acetyl-alpha-D-glucosamine: step 2/6. In terms of biological role, catalyzes the hydrolysis of UDP-3-O-myristoyl-N-acetylglucosamine to form UDP-3-O-myristoylglucosamine and acetate, the committed step in lipid A biosynthesis. The chain is UDP-3-O-acyl-N-acetylglucosamine deacetylase from Acinetobacter baumannii (strain ATCC 17978 / DSM 105126 / CIP 53.77 / LMG 1025 / NCDC KC755 / 5377).